The chain runs to 185 residues: Ribosome-recycling factor (185 aa).

The protein belongs to the RRF family.

Its subcellular location is the cytoplasm. Functionally, responsible for the release of ribosomes from messenger RNA at the termination of protein biosynthesis. May increase the efficiency of translation by recycling ribosomes from one round of translation to another. This is Ribosome-recycling factor from Buchnera aphidicola subsp. Acyrthosiphon pisum (strain Tuc7).